Reading from the N-terminus, the 522-residue chain is Glucans biosynthesis protein G (522 aa).

An N-terminal signal peptide occupies residues 1–33 (MLDNKFGFKQRVASLRWLSAAIMLSVSAVPAWA).

It belongs to the OpgD/OpgG family.

It is found in the periplasm. It functions in the pathway glycan metabolism; osmoregulated periplasmic glucan (OPG) biosynthesis. Involved in the biosynthesis of osmoregulated periplasmic glucans (OPGs). The sequence is that of Glucans biosynthesis protein G from Pectobacterium carotovorum subsp. carotovorum (strain PC1).